Reading from the N-terminus, the 175-residue chain is NADH-ubiquinone oxidoreductase chain 6 (175 aa).

Transmembrane regions (helical) follow at residues 1–21 (MMAY…VGFS), 25–45 (SPIY…GIVM), 47–67 (FGGS…MLVV), 87–107 (AAVL…VLYV), 116–136 (VFNF…FGVF), and 149–169 (YGVW…LVIL).

This sequence belongs to the complex I subunit 6 family. Core subunit of respiratory chain NADH dehydrogenase (Complex I) which is composed of 45 different subunits.

Its subcellular location is the mitochondrion inner membrane. It catalyses the reaction a ubiquinone + NADH + 5 H(+)(in) = a ubiquinol + NAD(+) + 4 H(+)(out). In terms of biological role, core subunit of the mitochondrial membrane respiratory chain NADH dehydrogenase (Complex I) which catalyzes electron transfer from NADH through the respiratory chain, using ubiquinone as an electron acceptor. Essential for the catalytic activity and assembly of complex I. This Ceratotherium simum (White rhinoceros) protein is NADH-ubiquinone oxidoreductase chain 6 (MT-ND6).